The primary structure comprises 131 residues: Profilin-10 (131 aa).

Cys13 and Cys115 are disulfide-bonded. An Involved in PIP2 interaction motif is present at residues 81–97 (AVIRGKKGAGGITIKKT). The residue at position 111 (Thr111) is a Phosphothreonine.

The protein belongs to the profilin family. In terms of assembly, occurs in many kinds of cells as a complex with monomeric actin in a 1:1 ratio. In terms of processing, phosphorylated by MAP kinases.

Its subcellular location is the cytoplasm. It is found in the cytoskeleton. In terms of biological role, binds to actin and affects the structure of the cytoskeleton. At high concentrations, profilin prevents the polymerization of actin, whereas it enhances it at low concentrations. This chain is Profilin-10, found in Phleum pratense (Common timothy).